The following is a 477-amino-acid chain: MAGSHAGTLRVLQAVDTELTADSVEWCPVEGYQHLLACGTYQLRAPRDQPALDGSEPQVRLGRLYLFSFSEHNTAKPLLEVQRRDSSAVLDMKWCHIPVSGHVLLGLANASGSIGLLRLMECENNSYTLQPISSLALDENCLSLSMDWSTGKSVRAREQPLKIISSDSKGQLHLLMVNEGTAELQLVASWPAHHFEAWIAAFNYWQTELVYSGGDDCLLRGWDTRMLGTPVFTSKRHCMGVCSIQSSPHQEHILATGSYDEHVLLWDTRNIRQPLADVPVQGGVWRLKWHPVHHHLLLAACMHNGFKILNCQKAIEEKQDITVLTSHEMPNSLVYGADWSWLFHSMKPTPTWFFDQNDMGVKAADHSSLKVTEEPPIHSQEQTMDRQVEGPANAHTRAELKASLLPLTEDMKNSKDCSSSSVKTRDLSHCSGGQSFDNSLLATCSFYDHVLHLWKWETNQARTLCSGTGCDLGSADH.

WD repeat units lie at residues 194-232 (HFEAWIAAFNYWQTELVYSGGDDCLLRGWDTRMLGTPVF), 236-276 (RHCM…QPLA), and 422-464 (VKTR…ARTL).

It belongs to the DPH7 family. In terms of assembly, interacts with INCA1.

The enzyme catalyses diphthine methyl ester-[translation elongation factor 2] + H2O = diphthine-[translation elongation factor 2] + methanol + H(+). The protein operates within protein modification; peptidyl-diphthamide biosynthesis. Catalyzes the demethylation of diphthine methyl ester to form diphthine, an intermediate diphthamide biosynthesis, a post-translational modification of histidine which occurs in translation elongation factor 2 (EEF2). The chain is Diphthine methyltransferase (Dph7) from Mus musculus (Mouse).